The sequence spans 549 residues: Glucose-6-phosphate isomerase (549 aa).

Residue Glu353 is the Proton donor of the active site. Active-site residues include His384 and Lys513.

It belongs to the GPI family.

It is found in the cytoplasm. The enzyme catalyses alpha-D-glucose 6-phosphate = beta-D-fructose 6-phosphate. It participates in carbohydrate biosynthesis; gluconeogenesis. The protein operates within carbohydrate degradation; glycolysis; D-glyceraldehyde 3-phosphate and glycerone phosphate from D-glucose: step 2/4. Functionally, catalyzes the reversible isomerization of glucose-6-phosphate to fructose-6-phosphate. The chain is Glucose-6-phosphate isomerase from Bartonella bacilliformis (strain ATCC 35685 / KC583 / Herrer 020/F12,63).